Reading from the N-terminus, the 187-residue chain is V-type ATP synthase subunit E (187 aa).

The protein belongs to the V-ATPase E subunit family.

Functionally, produces ATP from ADP in the presence of a proton gradient across the membrane. This is V-type ATP synthase subunit E from Geotalea uraniireducens (strain Rf4) (Geobacter uraniireducens).